The primary structure comprises 506 residues: Cobyric acid synthase (506 aa).

The GATase cobBQ-type domain maps to 251–448; that stretch reads DITIAIVQLP…LHGLFDSDAF (198 aa). Cys332 serves as the catalytic Nucleophile. The active site involves His440.

It belongs to the CobB/CobQ family. CobQ subfamily.

It functions in the pathway cofactor biosynthesis; adenosylcobalamin biosynthesis. Catalyzes amidations at positions B, D, E, and G on adenosylcobyrinic A,C-diamide. NH(2) groups are provided by glutamine, and one molecule of ATP is hydrogenolyzed for each amidation. This is Cobyric acid synthase from Salmonella dublin (strain CT_02021853).